Consider the following 319-residue polypeptide: MNLDSFFSFLLKSLIMALSNSSWRLPQPSFFLVGIPGLEESQHWIALPLGILYLLALVGNVTILFIIWMDPSLHQSMYLFLSMLAAIDLVVASSTAPKALAVLLVRAQEIGYTVCLIQMFFTHAFSSMESGVLVAMALDRYVAICHPLHHSTILHPGVIGHIGMVVLVRGLLLLIPFLILLRKLIFCQATIIGHAYCEHMAVVKLACSETTVNRAYGLTVALLVVGLDVLAIGVSYAHILQAVLKVPGNEARLKAFSTCGSHVCVILVFYIPGMFSFLTHRFGHHVPHHVHVLLAILYRLVPPALNPLVYRVKTQKIHQ.

The Extracellular segment spans residues 1–43 (MNLDSFFSFLLKSLIMALSNSSWRLPQPSFFLVGIPGLEESQH). The N-linked (GlcNAc...) asparagine glycan is linked to asparagine 20. The helical transmembrane segment at 44 to 64 (WIALPLGILYLLALVGNVTIL) threads the bilayer. Residues 65–72 (FIIWMDPS) are Cytoplasmic-facing. The chain crosses the membrane as a helical span at residues 73-93 (LHQSMYLFLSMLAAIDLVVAS). Residues 94 to 117 (STAPKALAVLLVRAQEIGYTVCLI) lie on the Extracellular side of the membrane. Cysteine 115 and cysteine 207 are disulfide-bonded. The chain crosses the membrane as a helical span at residues 118-138 (QMFFTHAFSSMESGVLVAMAL). Residues 139 to 157 (DRYVAICHPLHHSTILHPG) lie on the Cytoplasmic side of the membrane. A helical transmembrane segment spans residues 158–178 (VIGHIGMVVLVRGLLLLIPFL). The Extracellular segment spans residues 179-214 (ILLRKLIFCQATIIGHAYCEHMAVVKLACSETTVNR). Residues 215–235 (AYGLTVALLVVGLDVLAIGVS) traverse the membrane as a helical segment. Residues 236 to 255 (YAHILQAVLKVPGNEARLKA) are Cytoplasmic-facing. Residues 256-276 (FSTCGSHVCVILVFYIPGMFS) traverse the membrane as a helical segment. Residues 277 to 291 (FLTHRFGHHVPHHVH) lie on the Extracellular side of the membrane. A helical transmembrane segment spans residues 292–312 (VLLAILYRLVPPALNPLVYRV). Topologically, residues 313–319 (KTQKIHQ) are cytoplasmic.

It belongs to the G-protein coupled receptor 1 family.

The protein resides in the cell membrane. Functionally, odorant receptor. The protein is Putative olfactory receptor 52L2 (OR52L2P) of Homo sapiens (Human).